The following is a 686-amino-acid chain: Leucine-rich repeat-containing protein 49 (686 aa).

LRR repeat units follow at residues His113–Gln134, Arg135–Lys156, Ser157–Lys178, Asn179–Cys200, Asp201–Asp222, Ser223–Pro244, and Cys245–Ala266. The region spanning Asn279–Val317 is the LRRCT domain. Disordered stretches follow at residues Arg311–Ser332 and Ala359–Asn381. The stretch at Lys319 to Thr341 forms a coiled coil.

In terms of assembly, part of the neuronal tubulin polyglutamylase complex which contains TPGS1, TPGS2, TTLL1, LRRC49 and NICN1. Interacts with PCM1; TTLL1, TPGS1, TPGS2 and LRRC49.

It is found in the cytoplasm. It localises to the cytoskeleton. The protein localises to the microtubule organizing center. Its subcellular location is the centrosome. The protein resides in the centriolar satellite. Functionally, subunit of the tubulin polyglutamylase complex (TPGC). The complex mediates cilia and flagella polyglutamylation which is essential for their biogenesis and motility. The chain is Leucine-rich repeat-containing protein 49 (Lrrc49) from Mus musculus (Mouse).